The sequence spans 200 residues: Tegument protein UL55 homolog (200 aa).

Residues 1-20 are compositionally biased toward basic and acidic residues; sequence MLPANRAEHSSDAEPRDIGS. The tract at residues 1 to 23 is disordered; sequence MLPANRAEHSSDAEPRDIGSHGR.

The protein belongs to the alphaherpesvirinae HHV-1 UL55 family.

It localises to the virion tegument. Its subcellular location is the host nucleus matrix. This Equine herpesvirus 1 (strain Ab4p) (EHV-1) protein is Tegument protein UL55 homolog.